The chain runs to 141 residues: Nucleoside diphosphate kinase (141 aa).

The ATP site is built by Lys-9, Phe-57, Arg-85, Thr-91, Arg-102, and Asn-112. His-115 functions as the Pros-phosphohistidine intermediate in the catalytic mechanism.

This sequence belongs to the NDK family. Homotetramer. The cofactor is Mg(2+).

Its subcellular location is the cytoplasm. It carries out the reaction a 2'-deoxyribonucleoside 5'-diphosphate + ATP = a 2'-deoxyribonucleoside 5'-triphosphate + ADP. The catalysed reaction is a ribonucleoside 5'-diphosphate + ATP = a ribonucleoside 5'-triphosphate + ADP. Major role in the synthesis of nucleoside triphosphates other than ATP. The ATP gamma phosphate is transferred to the NDP beta phosphate via a ping-pong mechanism, using a phosphorylated active-site intermediate. The polypeptide is Nucleoside diphosphate kinase (Prosthecochloris aestuarii (strain DSM 271 / SK 413)).